A 418-amino-acid chain; its full sequence is Serine hydroxymethyltransferase (418 aa).

Residues leucine 121 and 125-127 (GHL) each bind (6S)-5,6,7,8-tetrahydrofolate. Lysine 230 bears the N6-(pyridoxal phosphate)lysine mark. Residue 355 to 357 (SPF) coordinates (6S)-5,6,7,8-tetrahydrofolate.

The protein belongs to the SHMT family. In terms of assembly, homodimer. Pyridoxal 5'-phosphate is required as a cofactor.

It is found in the cytoplasm. It carries out the reaction (6R)-5,10-methylene-5,6,7,8-tetrahydrofolate + glycine + H2O = (6S)-5,6,7,8-tetrahydrofolate + L-serine. It participates in one-carbon metabolism; tetrahydrofolate interconversion. It functions in the pathway amino-acid biosynthesis; glycine biosynthesis; glycine from L-serine: step 1/1. Its function is as follows. Catalyzes the reversible interconversion of serine and glycine with tetrahydrofolate (THF) serving as the one-carbon carrier. This reaction serves as the major source of one-carbon groups required for the biosynthesis of purines, thymidylate, methionine, and other important biomolecules. Also exhibits THF-independent aldolase activity toward beta-hydroxyamino acids, producing glycine and aldehydes, via a retro-aldol mechanism. In Streptococcus pyogenes serotype M6 (strain ATCC BAA-946 / MGAS10394), this protein is Serine hydroxymethyltransferase.